Consider the following 558-residue polypeptide: Rhamnogalacturonase B (558 aa).

The N-terminal stretch at 1–21 (MLLDKLSVLSFLGLAPIFAAA) is a signal peptide. A disulfide bridge links cysteine 42 with cysteine 68. N-linked (GlcNAc...) asparagine glycosylation occurs at asparagine 145. Aspartate 219 (proton donor) is an active-site residue. Cysteine 221 and cysteine 238 are joined by a disulfide. Asparagine 239 and asparagine 254 each carry an N-linked (GlcNAc...) asparagine glycan. Histidine 294 is a catalytic residue. A glycan (N-linked (GlcNAc...) asparagine) is linked at asparagine 321. 2 disulfides stabilise this stretch: cysteine 344/cysteine 350 and cysteine 372/cysteine 381. Over residues 503 to 526 (VGAQEGSTTSAPSFAAPSGAGNSP) the composition is skewed to low complexity. Residues 503 to 558 (VGAQEGSTTSAPSFAAPSGAGNSPQGPTGASGFGEKGQQGEQGEQGEQGEQGVCYV) form a disordered region.

It belongs to the glycosyl hydrolase 28 family.

The protein localises to the secreted. The catalysed reaction is Endohydrolysis of alpha-D-GalA-(1-&gt;2)-alpha-L-Rha glycosidic bond in the rhamnogalacturonan I backbone with initial inversion of anomeric configuration releasing oligosaccharides with beta-D-GalA at the reducing end.. Pectinolytic enzymes consist of four classes of enzymes: pectine lyase, polygalacturonase, pectin methylesterase and rhamnogalacturonase. Hydrolyzes alpha-D-galacturonopyranosyl-(1,2)-alpha-L-rhamnopyranosyl linkages in the backbone of the hairy regions of pectins. The chain is Rhamnogalacturonase B (rhgB) from Aspergillus niger.